We begin with the raw amino-acid sequence, 129 residues long: Phosphoribosyl-AMP cyclohydrolase (129 aa).

Asp-76 contacts Mg(2+). Cys-77 is a binding site for Zn(2+). Mg(2+) contacts are provided by Asp-78 and Asp-80. Zn(2+) contacts are provided by Cys-97 and Cys-104.

This sequence belongs to the PRA-CH family. Homodimer. Requires Mg(2+) as cofactor. Zn(2+) serves as cofactor.

The protein localises to the cytoplasm. The catalysed reaction is 1-(5-phospho-beta-D-ribosyl)-5'-AMP + H2O = 1-(5-phospho-beta-D-ribosyl)-5-[(5-phospho-beta-D-ribosylamino)methylideneamino]imidazole-4-carboxamide. The protein operates within amino-acid biosynthesis; L-histidine biosynthesis; L-histidine from 5-phospho-alpha-D-ribose 1-diphosphate: step 3/9. Its function is as follows. Catalyzes the hydrolysis of the adenine ring of phosphoribosyl-AMP. This is Phosphoribosyl-AMP cyclohydrolase from Methylibium petroleiphilum (strain ATCC BAA-1232 / LMG 22953 / PM1).